Consider the following 403-residue polypeptide: Protein LAZ1 homolog 2 (403 aa).

6 helical membrane-spanning segments follow: residues serine 16–leucine 36, tryptophan 50–serine 70, methionine 162–glycine 182, glycine 191–valine 211, isoleucine 236–leucine 256, and phenylalanine 269–glutamate 289. The interval serine 381–glutamate 403 is disordered.

Belongs to the TMEM184 family.

It localises to the membrane. The protein is Protein LAZ1 homolog 2 of Arabidopsis thaliana (Mouse-ear cress).